A 296-amino-acid chain; its full sequence is Aquaporin PIP1-6 (296 aa).

Transmembrane regions (helical) follow at residues 63-83 (IAEF…VMGV) and 98-120 (IAWA…SGGH). Positions 122-124 (NPA) match the NPA 1 motif. The next 3 helical transmembrane spans lie at 141 to 161 (VYYV…VKAF), 183 to 203 (GDGL…VFSA), and 217 to 237 (ALAP…TIPI). Positions 243–245 (NPA) match the NPA 2 motif. A helical membrane pass occupies residues 265-285 (IFWVGPFAGAALAAVYHQVVL).

It belongs to the MIP/aquaporin (TC 1.A.8) family. PIP (TC 1.A.8.11) subfamily.

It is found in the cell membrane. Its function is as follows. Aquaporins facilitate the transport of water and small neutral solutes across cell membranes. In Zea mays (Maize), this protein is Aquaporin PIP1-6 (PIP1-6).